The primary structure comprises 148 residues: Aspartate 1-decarboxylase (148 aa).

S25 acts as the Schiff-base intermediate with substrate; via pyruvic acid in catalysis. Position 25 is a pyruvic acid (Ser) (S25). Position 57 (T57) interacts with substrate. Catalysis depends on Y58, which acts as the Proton donor. Residue 73–75 coordinates substrate; the sequence is GAA.

This sequence belongs to the PanD family. Heterooctamer of four alpha and four beta subunits. Pyruvate is required as a cofactor. Is synthesized initially as an inactive proenzyme, which is activated by self-cleavage at a specific serine bond to produce a beta-subunit with a hydroxyl group at its C-terminus and an alpha-subunit with a pyruvoyl group at its N-terminus.

It is found in the cytoplasm. The catalysed reaction is L-aspartate + H(+) = beta-alanine + CO2. Its pathway is cofactor biosynthesis; (R)-pantothenate biosynthesis; beta-alanine from L-aspartate: step 1/1. In terms of biological role, catalyzes the pyruvoyl-dependent decarboxylation of aspartate to produce beta-alanine. This is Aspartate 1-decarboxylase from Rhodococcus erythropolis (strain PR4 / NBRC 100887).